A 320-amino-acid polypeptide reads, in one-letter code: Beta-ketoacyl-[acyl-carrier-protein] synthase III (320 aa).

Active-site residues include Cys-114 and His-247. The interval 248–252 is ACP-binding; that stretch reads QANRR. Asn-277 is a catalytic residue.

The protein belongs to the thiolase-like superfamily. FabH family. As to quaternary structure, homodimer.

Its subcellular location is the cytoplasm. It catalyses the reaction malonyl-[ACP] + acetyl-CoA + H(+) = 3-oxobutanoyl-[ACP] + CO2 + CoA. Its pathway is lipid metabolism; fatty acid biosynthesis. Its function is as follows. Catalyzes the condensation reaction of fatty acid synthesis by the addition to an acyl acceptor of two carbons from malonyl-ACP. Catalyzes the first condensation reaction which initiates fatty acid synthesis and may therefore play a role in governing the total rate of fatty acid production. Possesses both acetoacetyl-ACP synthase and acetyl transacylase activities. Its substrate specificity determines the biosynthesis of branched-chain and/or straight-chain of fatty acids. The protein is Beta-ketoacyl-[acyl-carrier-protein] synthase III of Neisseria meningitidis serogroup C (strain 053442).